A 1394-amino-acid polypeptide reads, in one-letter code: DNA-directed RNA polymerase subunit beta (1394 aa).

The protein belongs to the RNA polymerase beta chain family. The RNAP catalytic core consists of 2 alpha, 1 beta, 1 beta' and 1 omega subunit. When a sigma factor is associated with the core the holoenzyme is formed, which can initiate transcription.

It carries out the reaction RNA(n) + a ribonucleoside 5'-triphosphate = RNA(n+1) + diphosphate. In terms of biological role, DNA-dependent RNA polymerase catalyzes the transcription of DNA into RNA using the four ribonucleoside triphosphates as substrates. The protein is DNA-directed RNA polymerase subunit beta of Anaplasma phagocytophilum (Ehrlichia phagocytophila).